The following is a 203-amino-acid chain: Small ribosomal subunit protein uS4 (203 aa).

The 61-residue stretch at 93 to 153 (RRLDNIVYRL…DKSKNLQQVK (61 aa)) folds into the S4 RNA-binding domain.

It belongs to the universal ribosomal protein uS4 family. As to quaternary structure, part of the 30S ribosomal subunit. Contacts protein S5. The interaction surface between S4 and S5 is involved in control of translational fidelity.

Its function is as follows. One of the primary rRNA binding proteins, it binds directly to 16S rRNA where it nucleates assembly of the body of the 30S subunit. In terms of biological role, with S5 and S12 plays an important role in translational accuracy. The polypeptide is Small ribosomal subunit protein uS4 (Lactobacillus gasseri (strain ATCC 33323 / DSM 20243 / BCRC 14619 / CIP 102991 / JCM 1131 / KCTC 3163 / NCIMB 11718 / NCTC 13722 / AM63)).